Consider the following 1370-residue polypeptide: DNA-directed RNA polymerase subunit beta (1370 aa).

It belongs to the RNA polymerase beta chain family. The RNAP catalytic core consists of 2 alpha, 1 beta, 1 beta' and 1 omega subunit. When a sigma factor is associated with the core the holoenzyme is formed, which can initiate transcription.

The enzyme catalyses RNA(n) + a ribonucleoside 5'-triphosphate = RNA(n+1) + diphosphate. In terms of biological role, DNA-dependent RNA polymerase catalyzes the transcription of DNA into RNA using the four ribonucleoside triphosphates as substrates. The polypeptide is DNA-directed RNA polymerase subunit beta (Syntrophobacter fumaroxidans (strain DSM 10017 / MPOB)).